Here is a 447-residue protein sequence, read N- to C-terminus: Glutamate--tRNA ligase 2 (447 aa).

Residues 8 to 18 (PSPTGYLHVGN) carry the 'HIGH' region motif. A 'KMSKS' region motif is present at residues 239 to 243 (KLSKR). Residue K242 participates in ATP binding.

The protein belongs to the class-I aminoacyl-tRNA synthetase family. Glutamate--tRNA ligase type 1 subfamily. Monomer.

Its subcellular location is the cytoplasm. It carries out the reaction tRNA(Glu) + L-glutamate + ATP = L-glutamyl-tRNA(Glu) + AMP + diphosphate. Functionally, catalyzes the attachment of glutamate to tRNA(Glu) in a two-step reaction: glutamate is first activated by ATP to form Glu-AMP and then transferred to the acceptor end of tRNA(Glu). This is Glutamate--tRNA ligase 2 from Granulibacter bethesdensis (strain ATCC BAA-1260 / CGDNIH1).